Reading from the N-terminus, the 85-residue chain is MASALSPGSRVLIALIRVYQRLISPLLGPHCRFTPTCSSYGIEALRRFGVIKGSWLTVKRVLKCHPLHPGGDDPVPPGPFDTREH.

The protein belongs to the UPF0161 family.

The protein resides in the cell membrane. Functionally, could be involved in insertion of integral membrane proteins into the membrane. Lyses fish blood cells. The chain is Putative membrane protein insertion efficiency factor (hlyA) from Aeromonas hydrophila.